Consider the following 426-residue polypeptide: Riboflavin biosynthesis protein PYRD, chloroplastic (426 aa).

A chloroplast-targeting transit peptide spans 1–61 (MQISCLPISI…SQTGFSNPVL (61 aa)). The 123-residue stretch at 72 to 194 (VDDSFYMRKC…RLKDAGIDVT (123 aa)) folds into the CMP/dCMP-type deaminase domain. Histidine 121 serves as a coordination point for Zn(2+). Glutamate 123 functions as the Proton donor in the catalytic mechanism. Residues cysteine 146 and cysteine 155 each contribute to the Zn(2+) site.

The cofactor is Zn(2+).

The protein resides in the plastid. It is found in the chloroplast. The catalysed reaction is 2,5-diamino-6-hydroxy-4-(5-phosphoribosylamino)-pyrimidine + H2O + H(+) = 5-amino-6-(5-phospho-D-ribosylamino)uracil + NH4(+). Its pathway is cofactor biosynthesis; riboflavin biosynthesis; 5-amino-6-(D-ribitylamino)uracil from GTP: step 2/4. Functionally, monofunctional pyrimidine deaminase involved in the riboflavin biosynthesis pathway. Also has a reductase domain that lacks catalytically essential substrate-binding residues. The chain is Riboflavin biosynthesis protein PYRD, chloroplastic (PYRD) from Arabidopsis thaliana (Mouse-ear cress).